The following is a 500-amino-acid chain: Tektin-like protein 1 (500 aa).

Residues 1–25 form a disordered region; it reads MPVLLPSTDRDQDSRVGAPEWHQAA. The residue at position 14 (S14) is a Phosphoserine. A coiled-coil region spans residues 198-229; it reads MLVWEREELKSMKRKMEKDMERSEALLKALAS. Residues 265-286 form a disordered region; that stretch reads VDITRPPTPRTQGLKTPPPDPV. A Phosphotyrosine modification is found at Y372. Residues 422-448 are a coiled coil; sequence LTRHNLQMEKNLKELRTTHDNLAWSLN.

As to quaternary structure, microtubule inner protein component of sperm flagellar doublet microtubules.

The protein localises to the cytoplasm. The protein resides in the cytoskeleton. It is found in the flagellum axoneme. Its function is as follows. Microtubule inner protein (MIP) part of the dynein-decorated doublet microtubules (DMTs) in sperm flagellar axoneme, which is required for motile flagellum beating. Forms an extensive interaction network cross-linking the lumen of axonemal doublet microtubules. The protein is Tektin-like protein 1 of Rattus norvegicus (Rat).